Consider the following 450-residue polypeptide: UDP-N-acetylmuramoylalanine--D-glutamate ligase (450 aa).

119–125 (GSNGKTT) contributes to the ATP binding site.

The protein belongs to the MurCDEF family.

It is found in the cytoplasm. It carries out the reaction UDP-N-acetyl-alpha-D-muramoyl-L-alanine + D-glutamate + ATP = UDP-N-acetyl-alpha-D-muramoyl-L-alanyl-D-glutamate + ADP + phosphate + H(+). It participates in cell wall biogenesis; peptidoglycan biosynthesis. In terms of biological role, cell wall formation. Catalyzes the addition of glutamate to the nucleotide precursor UDP-N-acetylmuramoyl-L-alanine (UMA). The chain is UDP-N-acetylmuramoylalanine--D-glutamate ligase from Bacillus cereus (strain AH187).